The primary structure comprises 159 residues: 3-dehydroquinate dehydratase (159 aa).

Tyr-22 serves as the catalytic Proton acceptor. Residues Asn-73, His-79, and Asp-86 each coordinate substrate. His-99 acts as the Proton donor in catalysis. Substrate contacts are provided by residues 100 to 101 (IS) and Arg-110.

It belongs to the type-II 3-dehydroquinase family. As to quaternary structure, homododecamer.

It carries out the reaction 3-dehydroquinate = 3-dehydroshikimate + H2O. Its pathway is metabolic intermediate biosynthesis; chorismate biosynthesis; chorismate from D-erythrose 4-phosphate and phosphoenolpyruvate: step 3/7. Functionally, catalyzes a trans-dehydration via an enolate intermediate. This Campylobacter jejuni subsp. jejuni serotype O:6 (strain 81116 / NCTC 11828) protein is 3-dehydroquinate dehydratase.